The primary structure comprises 318 residues: Acetyl-coenzyme A carboxylase carboxyl transferase subunit alpha (318 aa).

The 258-residue stretch at 36–293 (EIDRLKEKST…KTRLSEQLDQ (258 aa)) folds into the CoA carboxyltransferase C-terminal domain.

The protein belongs to the AccA family. As to quaternary structure, acetyl-CoA carboxylase is a heterohexamer composed of biotin carboxyl carrier protein (AccB), biotin carboxylase (AccC) and two subunits each of ACCase subunit alpha (AccA) and ACCase subunit beta (AccD).

The protein localises to the cytoplasm. The catalysed reaction is N(6)-carboxybiotinyl-L-lysyl-[protein] + acetyl-CoA = N(6)-biotinyl-L-lysyl-[protein] + malonyl-CoA. It functions in the pathway lipid metabolism; malonyl-CoA biosynthesis; malonyl-CoA from acetyl-CoA: step 1/1. Functionally, component of the acetyl coenzyme A carboxylase (ACC) complex. First, biotin carboxylase catalyzes the carboxylation of biotin on its carrier protein (BCCP) and then the CO(2) group is transferred by the carboxyltransferase to acetyl-CoA to form malonyl-CoA. The sequence is that of Acetyl-coenzyme A carboxylase carboxyl transferase subunit alpha from Teredinibacter turnerae (strain ATCC 39867 / T7901).